Reading from the N-terminus, the 259-residue chain is Ubiquitin-conjugating enzyme E2 J2 (259 aa).

Residues 1-226 lie on the Cytoplasmic side of the membrane; it reads MSSTSSKRAP…AGLQQANRHH (226 aa). One can recognise a UBC core domain in the interval 12-162; it reads TATQRLKQDY…DKVFCELFPE (151 aa). Catalysis depends on Cys94, which acts as the Glycyl thioester intermediate. A helical; Anchor for type IV membrane protein transmembrane segment spans residues 227–247; sequence GLLGGALANLFVIVGFAAFAY. Residues 248–259 are Lumenal-facing; it reads TVKYVLRSIAQE.

It belongs to the ubiquitin-conjugating enzyme family. Auto-ubiquitinated.

It localises to the endoplasmic reticulum membrane. It catalyses the reaction S-ubiquitinyl-[E1 ubiquitin-activating enzyme]-L-cysteine + [E2 ubiquitin-conjugating enzyme]-L-cysteine = [E1 ubiquitin-activating enzyme]-L-cysteine + S-ubiquitinyl-[E2 ubiquitin-conjugating enzyme]-L-cysteine.. It participates in protein modification; protein ubiquitination. Functionally, catalyzes the covalent attachment of ubiquitin to other proteins. Seems to function in the selective degradation of misfolded membrane proteins from the endoplasmic reticulum (ERAD). In cooperation with the GATOR2 complex, catalyzes 'Lys-6'-linked ubiquitination of NPRL2. The polypeptide is Ubiquitin-conjugating enzyme E2 J2 (UBE2J2) (Homo sapiens (Human)).